The sequence spans 377 residues: NIF3-like protein 1 (377 aa).

Lys-109 carries the N6-acetyllysine modification. Positions 244-377 (LLLYTGMGRL…ETDRDPLHVI (134 aa)) are mediates interaction with COPS2. Thr-255 is subject to Phosphothreonine. A Phosphoserine modification is found at Ser-259.

Belongs to the GTP cyclohydrolase I type 2/NIF3 family. As to quaternary structure, homodimer. Interacts with COPS2. Interacts with THOC7.

The protein resides in the cytoplasm. It localises to the nucleus. May function as a transcriptional corepressor through its interaction with COPS2, negatively regulating the expression of genes involved in neuronal differentiation. This Bos taurus (Bovine) protein is NIF3-like protein 1.